Here is a 446-residue protein sequence, read N- to C-terminus: N-succinylarginine dihydrolase (446 aa).

Residues 19 to 28 (AGLSFGNVAS), Asn-110, and 137 to 138 (HR) each bind substrate. Glu-174 is an active-site residue. Position 213 (Arg-213) interacts with substrate. Residue His-249 is part of the active site. Asp-251 and Asn-364 together coordinate substrate. The active-site Nucleophile is the Cys-370.

It belongs to the succinylarginine dihydrolase family. In terms of assembly, homodimer.

The enzyme catalyses N(2)-succinyl-L-arginine + 2 H2O + 2 H(+) = N(2)-succinyl-L-ornithine + 2 NH4(+) + CO2. The protein operates within amino-acid degradation; L-arginine degradation via AST pathway; L-glutamate and succinate from L-arginine: step 2/5. In terms of biological role, catalyzes the hydrolysis of N(2)-succinylarginine into N(2)-succinylornithine, ammonia and CO(2). This is N-succinylarginine dihydrolase from Burkholderia pseudomallei (strain 668).